The primary structure comprises 428 residues: UPF0597 protein PBPRB0240 (428 aa).

Belongs to the UPF0597 family.

The sequence is that of UPF0597 protein PBPRB0240 from Photobacterium profundum (strain SS9).